Reading from the N-terminus, the 159-residue chain is NAD(P)H-quinone oxidoreductase subunit I, chloroplastic (159 aa).

4Fe-4S ferredoxin-type domains are found at residues 55–84 (GRIH…VDWN) and 95–124 (KNYS…MTEE). [4Fe-4S] cluster-binding residues include Cys64, Cys67, Cys70, Cys74, Cys104, Cys107, Cys110, and Cys114.

The protein belongs to the complex I 23 kDa subunit family. In terms of assembly, NDH is composed of at least 16 different subunits, 5 of which are encoded in the nucleus. It depends on [4Fe-4S] cluster as a cofactor.

It localises to the plastid. Its subcellular location is the chloroplast thylakoid membrane. It catalyses the reaction a plastoquinone + NADH + (n+1) H(+)(in) = a plastoquinol + NAD(+) + n H(+)(out). The enzyme catalyses a plastoquinone + NADPH + (n+1) H(+)(in) = a plastoquinol + NADP(+) + n H(+)(out). Functionally, NDH shuttles electrons from NAD(P)H:plastoquinone, via FMN and iron-sulfur (Fe-S) centers, to quinones in the photosynthetic chain and possibly in a chloroplast respiratory chain. The immediate electron acceptor for the enzyme in this species is believed to be plastoquinone. Couples the redox reaction to proton translocation, and thus conserves the redox energy in a proton gradient. This chain is NAD(P)H-quinone oxidoreductase subunit I, chloroplastic, found in Chara vulgaris (Common stonewort).